Here is a 309-residue protein sequence, read N- to C-terminus: DNA replication terminus site-binding protein (309 aa).

This sequence belongs to the Tus family.

Its subcellular location is the cytoplasm. Trans-acting protein required for termination of DNA replication. Binds to DNA replication terminator sequences (terA to terF) to prevent the passage of replication forks. The termination efficiency will be affected by the affinity of this protein for the terminator sequence. The polypeptide is DNA replication terminus site-binding protein (Yersinia enterocolitica serotype O:8 / biotype 1B (strain NCTC 13174 / 8081)).